A 54-amino-acid chain; its full sequence is Large ribosomal subunit protein bL33 (54 aa).

This sequence belongs to the bacterial ribosomal protein bL33 family.

This is Large ribosomal subunit protein bL33 from Petrotoga mobilis (strain DSM 10674 / SJ95).